The sequence spans 73 residues: Protein SlyX homolog (73 aa).

Belongs to the SlyX family.

In Pasteurella multocida (strain Pm70), this protein is Protein SlyX homolog.